A 301-amino-acid polypeptide reads, in one-letter code: rRNA methyltransferase 1, mitochondrial (301 aa).

The transit peptide at 1–11 (MIRSRVNLARE) directs the protein to the mitochondrion. Residues 121 to 141 (YNNKNGQDSPHNDLNEGKSSS) are disordered.

It belongs to the class IV-like SAM-binding methyltransferase superfamily. RNA methyltransferase TrmH family.

The protein resides in the mitochondrion. The catalysed reaction is a guanosine in 21S rRNA + S-adenosyl-L-methionine = a 2'-O-methylguanosine in 21S rRNA + S-adenosyl-L-homocysteine + H(+). In terms of biological role, S-adenosyl-L-methionine-dependent 2'-O-ribose methyltransferase that catalyzes the formation of the 2'-O-methylguanosine corresponding to position 2270 in S.cerevisiae 21S mitochondrial large subunit ribosomal RNA (mtLSU rRNA), a universally conserved modification in the peptidyl transferase domain of the mtLSU rRNA. The polypeptide is rRNA methyltransferase 1, mitochondrial (Schizosaccharomyces pombe (strain 972 / ATCC 24843) (Fission yeast)).